The primary structure comprises 214 residues: Ribonuclease T (214 aa).

Positions 20-195 constitute an Exonuclease domain; sequence VVVDVETAGF…YDTQQTAELF (176 aa). Residues Asp-23, Glu-25, His-182, and Asp-187 each contribute to the Mg(2+) site. Residue His-182 is the Proton donor/acceptor of the active site.

This sequence belongs to the RNase T family. Homodimer. Mg(2+) is required as a cofactor.

Trims short 3' overhangs of a variety of RNA species, leaving a one or two nucleotide 3' overhang. Responsible for the end-turnover of tRNA: specifically removes the terminal AMP residue from uncharged tRNA (tRNA-C-C-A). Also appears to be involved in tRNA biosynthesis. In Vibrio campbellii (strain ATCC BAA-1116), this protein is Ribonuclease T.